Here is a 632-residue protein sequence, read N- to C-terminus: Threonine--tRNA ligase (632 aa).

Positions 1 to 61 constitute a TGS domain; it reads MPIVTLPDGS…EHDAEVSILT (61 aa). A catalytic region spans residues 242-533; that stretch reads DHRKLARKLD…LIEHYAGSMP (292 aa). Zn(2+)-binding residues include Cys-333, His-384, and His-510.

The protein belongs to the class-II aminoacyl-tRNA synthetase family. In terms of assembly, homodimer. It depends on Zn(2+) as a cofactor.

It localises to the cytoplasm. The enzyme catalyses tRNA(Thr) + L-threonine + ATP = L-threonyl-tRNA(Thr) + AMP + diphosphate + H(+). In terms of biological role, catalyzes the attachment of threonine to tRNA(Thr) in a two-step reaction: L-threonine is first activated by ATP to form Thr-AMP and then transferred to the acceptor end of tRNA(Thr). Also edits incorrectly charged L-seryl-tRNA(Thr). This is Threonine--tRNA ligase from Chromohalobacter salexigens (strain ATCC BAA-138 / DSM 3043 / CIP 106854 / NCIMB 13768 / 1H11).